The sequence spans 333 residues: Complement C1q and tumor necrosis factor-related protein 9B (333 aa).

Residues 1 to 19 form the signal peptide; it reads MRIWWLLLAIEICTGNINS. Collagen-like domains follow at residues 24 to 82, 95 to 154, and 155 to 191; these read RQGH…DGKV, GSPG…PGPM, and GPIG…GEKG. Residues 24 to 189 are disordered; it reads RQGHPGIPGN…IRGWKGDRGE (166 aa). A compositionally biased stretch (low complexity) spans 26 to 40; it reads GHPGIPGNPGHNGLP. 2 stretches are compositionally biased toward basic and acidic residues: residues 42–55 and 69–88; these read RDGR…KGDA and TSGE…KGIK. The C1q domain occupies 197–333; that stretch reads LVLPKSAFTV…FTGFLLFSSQ (137 aa).

Interacts with CTRP9A and ADIPOQ. Forms heterotrimers and heterooligomeric complexes with CTRP9A. Expressed at low levels. Not expressed in adipose tissues.

It is found in the secreted. Its function is as follows. Probable adipokine. Activates AMPK, AKT, and p44/42 MAPK signaling pathways. The sequence is that of Complement C1q and tumor necrosis factor-related protein 9B (C1QTNF9B) from Homo sapiens (Human).